Consider the following 571-residue polypeptide: Proline--tRNA ligase (571 aa).

This sequence belongs to the class-II aminoacyl-tRNA synthetase family. ProS type 1 subfamily. In terms of assembly, homodimer.

The protein localises to the cytoplasm. It catalyses the reaction tRNA(Pro) + L-proline + ATP = L-prolyl-tRNA(Pro) + AMP + diphosphate. Catalyzes the attachment of proline to tRNA(Pro) in a two-step reaction: proline is first activated by ATP to form Pro-AMP and then transferred to the acceptor end of tRNA(Pro). As ProRS can inadvertently accommodate and process non-cognate amino acids such as alanine and cysteine, to avoid such errors it has two additional distinct editing activities against alanine. One activity is designated as 'pretransfer' editing and involves the tRNA(Pro)-independent hydrolysis of activated Ala-AMP. The other activity is designated 'posttransfer' editing and involves deacylation of mischarged Ala-tRNA(Pro). The misacylated Cys-tRNA(Pro) is not edited by ProRS. In Actinobacillus pleuropneumoniae serotype 5b (strain L20), this protein is Proline--tRNA ligase.